A 476-amino-acid polypeptide reads, in one-letter code: Bifunctional protein HldE (476 aa).

Positions 1–318 (MKPTLPNYDQ…AEAIHGSQDS (318 aa)) are ribokinase. 195–198 (NMLE) lines the ATP pocket. Aspartate 264 is an active-site residue. The tract at residues 344–476 (MTNGCFDILH…IIEAIKGGRG (133 aa)) is cytidylyltransferase.

It in the N-terminal section; belongs to the carbohydrate kinase PfkB family. The protein in the C-terminal section; belongs to the cytidylyltransferase family. Homodimer.

The enzyme catalyses D-glycero-beta-D-manno-heptose 7-phosphate + ATP = D-glycero-beta-D-manno-heptose 1,7-bisphosphate + ADP + H(+). It carries out the reaction D-glycero-beta-D-manno-heptose 1-phosphate + ATP + H(+) = ADP-D-glycero-beta-D-manno-heptose + diphosphate. Its pathway is nucleotide-sugar biosynthesis; ADP-L-glycero-beta-D-manno-heptose biosynthesis; ADP-L-glycero-beta-D-manno-heptose from D-glycero-beta-D-manno-heptose 7-phosphate: step 1/4. It participates in nucleotide-sugar biosynthesis; ADP-L-glycero-beta-D-manno-heptose biosynthesis; ADP-L-glycero-beta-D-manno-heptose from D-glycero-beta-D-manno-heptose 7-phosphate: step 3/4. In terms of biological role, catalyzes the phosphorylation of D-glycero-D-manno-heptose 7-phosphate at the C-1 position to selectively form D-glycero-beta-D-manno-heptose-1,7-bisphosphate. Its function is as follows. Catalyzes the ADP transfer from ATP to D-glycero-beta-D-manno-heptose 1-phosphate, yielding ADP-D-glycero-beta-D-manno-heptose. The chain is Bifunctional protein HldE from Aliivibrio fischeri (strain MJ11) (Vibrio fischeri).